Consider the following 211-residue polypeptide: Guanylate kinase (211 aa).

The 181-residue stretch at Gly-7–Arg-187 folds into the Guanylate kinase-like domain. Gly-14–Ala-21 contributes to the ATP binding site.

This sequence belongs to the guanylate kinase family.

It localises to the cytoplasm. It catalyses the reaction GMP + ATP = GDP + ADP. Its function is as follows. Essential for recycling GMP and indirectly, cGMP. In Aster yellows witches'-broom phytoplasma (strain AYWB), this protein is Guanylate kinase.